Here is a 90-residue protein sequence, read N- to C-terminus: Small ribosomal subunit protein bS20 (90 aa).

Belongs to the bacterial ribosomal protein bS20 family.

Its function is as follows. Binds directly to 16S ribosomal RNA. This Rickettsia felis (strain ATCC VR-1525 / URRWXCal2) (Rickettsia azadi) protein is Small ribosomal subunit protein bS20.